A 330-amino-acid polypeptide reads, in one-letter code: MPAGHEEFDIPFPSRVNPFHARAEDRHVAWMRAMGLITGDAAEATYRRWSPAKVGARWFYLAQGEDLDLGCDIFGWFFAYDDHFDGPTGTDPRQTAAFVNRTVAMLDPRADPTGEHPLNIAFHDLWQRESAPMSPLWQRRAVDHWTQYLTAHITEATNRTRHTSPTIADYLELRHRTGFMPPLLDLIERVWRAEIPAPVYTTPEVQTLLHTTNQNINIVNDVLSLEKEEAHGDPHNLVLVIQHERQSTRQQALATARRMIDEWTDTFIRTEPRLPALCGRLGIPLADRTSLYTAVEGMRAAIRGNYDWCAETNRYAVHRPTGTGRATTPW.

Position 81 (Asp81) interacts with Mg(2+). Residues 81-85 (DDHFD) carry the DDXXD motif motif. Arg174 provides a ligand contact to substrate. 2 residues coordinate Mg(2+): Asn220 and Ser224. Residues 220–228 (NDVLSLEKE) carry the NXXXSXXXE motif motif. Lys227 contacts substrate. Glu228 serves as a coordination point for Mg(2+). 314–315 (RY) contributes to the substrate binding site.

Belongs to the terpene synthase family. As to quaternary structure, homodimer. Mg(2+) is required as a cofactor.

It catalyses the reaction (2E)-geranyl diphosphate + H2O = 1,8-cineole + diphosphate. It carries out the reaction neryl diphosphate + H2O = 1,8-cineole + diphosphate. Functionally, in vitro, catalyzes the formation of 1,8-cineole from geranyl diphosphate (GPP). Can also accept neryl diphosphate (NPP) as substrate to produce 1,8-cineole. This is 1,8-cineole synthase from Streptomyces clavuligerus.